The chain runs to 210 residues: Beta-crystallin A4 (210 aa).

The tract at residues 1-25 is N-terminal arm; that stretch reads MSGMFSGSISETSGMSLQCTKSAGH. Beta/gamma crystallin 'Greek key' domains lie at 26 to 65 and 66 to 112; these read WKIV…KVLS and GAWV…RPVA. The tract at residues 113–118 is connecting peptide; it reads CANHRD. 2 Beta/gamma crystallin 'Greek key' domains span residues 119-160 and 161-209; these read SRLT…HVHS and GAWV…RRIQ.

The protein belongs to the beta/gamma-crystallin family. As to quaternary structure, homo/heterodimer, or complexes of higher-order. The structure of beta-crystallin oligomers seems to be stabilized through interactions between the N-terminal arms.

Functionally, crystallins are the dominant structural components of the vertebrate eye lens. The protein is Beta-crystallin A4 (CRYBA4) of Bos taurus (Bovine).